The following is a 401-amino-acid chain: Phosphoglycerate kinase (401 aa).

Residues 29 to 31, Arg45, 69 to 72, Arg125, and Arg158 each bind substrate; these read DFN and HLGR. ATP is bound by residues Lys209, Glu331, and 357–360; that span reads GGDT.

Belongs to the phosphoglycerate kinase family. Monomer.

It is found in the cytoplasm. The catalysed reaction is (2R)-3-phosphoglycerate + ATP = (2R)-3-phospho-glyceroyl phosphate + ADP. It participates in carbohydrate degradation; glycolysis; pyruvate from D-glyceraldehyde 3-phosphate: step 2/5. This Wolinella succinogenes (strain ATCC 29543 / DSM 1740 / CCUG 13145 / JCM 31913 / LMG 7466 / NCTC 11488 / FDC 602W) (Vibrio succinogenes) protein is Phosphoglycerate kinase.